Here is a 215-residue protein sequence, read N- to C-terminus: L-fuculose phosphate aldolase (215 aa).

Residues 28–29 (GN), 43–44 (TG), and 71–72 (SS) each bind substrate. Catalysis depends on Glu73, which acts as the Proton donor/acceptor. Residues Glu73, His92, His94, and His155 each coordinate Zn(2+).

Belongs to the aldolase class II family. AraD/FucA subfamily. As to quaternary structure, homotetramer. Zn(2+) serves as cofactor.

The enzyme catalyses L-fuculose 1-phosphate = (S)-lactaldehyde + dihydroxyacetone phosphate. The protein operates within carbohydrate degradation; L-fucose degradation; L-lactaldehyde and glycerone phosphate from L-fucose: step 3/3. Functionally, involved in the degradation of L-fucose and D-arabinose. Catalyzes the reversible cleavage of L-fuculose 1-phosphate (Fuc1P) to yield dihydroxyacetone phosphate (DHAP) and L-lactaldehyde. The sequence is that of L-fuculose phosphate aldolase from Escherichia coli O157:H7.